The primary structure comprises 102 residues: Small ribosomal subunit protein uS10 (102 aa).

A disordered region spans residues 34-59 (QMSGPIPLPTKRLLVPTRKSPDGEGK).

Belongs to the universal ribosomal protein uS10 family. As to quaternary structure, part of the 30S ribosomal subunit.

Its function is as follows. Involved in the binding of tRNA to the ribosomes. This is Small ribosomal subunit protein uS10 from Methanopyrus kandleri (strain AV19 / DSM 6324 / JCM 9639 / NBRC 100938).